Reading from the N-terminus, the 346-residue chain is MASLGGDNSQAEGAEVRHVPVLIAEVIDALKPAPGAVIVDGTFGAGGYTRRILETGADVIAIDRDPTAIEAGRAMEKEFPGRLNLVESRFSALDEAVARMSGAGKKVDGVVLDIGVSSMQIDEAERGFSFQKDGPLDMRMSSRGSSAADAVNRLKTGDLARIFNFLGEERHAGRIARMIEKRRAAKPFTRTLDLANAIETLVGRNPKDRIHPATRVFQALRVYVNDELGELARALLAAERILKPGGRLVVVTFHSLEDRMVKRFFADRAGGSAGSRHMPETHMRLPSFTPAVKGAVGPTPEEEERNPRARSAKLRAGIRTENSPLEDDLSLFGLPKLPETNELARS.

Residues 46–48 (GGY), Asp-63, Phe-90, Asp-113, and Gln-120 contribute to the S-adenosyl-L-methionine site. The segment at 270–327 (GGSAGSRHMPETHMRLPSFTPAVKGAVGPTPEEEERNPRARSAKLRAGIRTENSPLED) is disordered.

Belongs to the methyltransferase superfamily. RsmH family.

The protein resides in the cytoplasm. It catalyses the reaction cytidine(1402) in 16S rRNA + S-adenosyl-L-methionine = N(4)-methylcytidine(1402) in 16S rRNA + S-adenosyl-L-homocysteine + H(+). Specifically methylates the N4 position of cytidine in position 1402 (C1402) of 16S rRNA. The chain is Ribosomal RNA small subunit methyltransferase H from Brucella ovis (strain ATCC 25840 / 63/290 / NCTC 10512).